A 926-amino-acid polypeptide reads, in one-letter code: Beta-mannosidase A (926 aa).

The N-terminal stretch at 1–21 is a signal peptide; sequence MHVKAETVLALLTPAPPSVVG. Residues Asn40, Asn242, Asn277, Asn311, and Asn342 are each glycosylated (N-linked (GlcNAc...) asparagine). Glu474 serves as the catalytic Proton donor. Residues Asn532, Asn603, Asn626, Asn653, Asn733, Asn756, Asn785, Asn793, Asn819, and Asn905 are each glycosylated (N-linked (GlcNAc...) asparagine).

Belongs to the glycosyl hydrolase 2 family. Beta-mannosidase A subfamily. In terms of assembly, homodimer.

The protein localises to the secreted. It carries out the reaction Hydrolysis of terminal, non-reducing beta-D-mannose residues in beta-D-mannosides.. It participates in glycan metabolism; N-glycan degradation. In terms of biological role, exoglycosidase that cleaves the single beta-linked mannose residue from the non-reducing end of beta-mannosidic oligosaccharides of various complexity and length. Involved in the degradation of polymeric mannan and galactomannan. The sequence is that of Beta-mannosidase A (mndA) from Aspergillus fumigatus (strain CBS 144.89 / FGSC A1163 / CEA10) (Neosartorya fumigata).